The chain runs to 429 residues: Enolase (429 aa).

Gln-163 contacts (2R)-2-phosphoglycerate. The active-site Proton donor is Glu-205. Mg(2+) contacts are provided by Asp-242, Glu-286, and Asp-313. (2R)-2-phosphoglycerate contacts are provided by Lys-338, Arg-367, Ser-368, and Lys-389. The active-site Proton acceptor is the Lys-338.

It belongs to the enolase family. It depends on Mg(2+) as a cofactor.

The protein resides in the cytoplasm. It is found in the secreted. The protein localises to the cell surface. It carries out the reaction (2R)-2-phosphoglycerate = phosphoenolpyruvate + H2O. It participates in carbohydrate degradation; glycolysis; pyruvate from D-glyceraldehyde 3-phosphate: step 4/5. Functionally, catalyzes the reversible conversion of 2-phosphoglycerate (2-PG) into phosphoenolpyruvate (PEP). It is essential for the degradation of carbohydrates via glycolysis. In Thermoanaerobacter pseudethanolicus (strain ATCC 33223 / 39E) (Clostridium thermohydrosulfuricum), this protein is Enolase.